Here is a 162-residue protein sequence, read N- to C-terminus: Cyclic pyranopterin monophosphate synthase (162 aa).

Substrate-binding positions include 75-77 (LCH) and 113-114 (ME). Residue Asp128 is part of the active site.

Belongs to the MoaC family. Homohexamer; trimer of dimers.

It carries out the reaction (8S)-3',8-cyclo-7,8-dihydroguanosine 5'-triphosphate = cyclic pyranopterin phosphate + diphosphate. It participates in cofactor biosynthesis; molybdopterin biosynthesis. Its function is as follows. Catalyzes the conversion of (8S)-3',8-cyclo-7,8-dihydroguanosine 5'-triphosphate to cyclic pyranopterin monophosphate (cPMP). This Xanthobacter autotrophicus (strain ATCC BAA-1158 / Py2) protein is Cyclic pyranopterin monophosphate synthase.